We begin with the raw amino-acid sequence, 413 residues long: Floricaula/leafy homolog 1 (413 aa).

Disordered stretches follow at residues glutamate 154–threonine 177 and glutamine 191–glutamate 239. Residues glycine 201–alanine 210 show a composition bias toward basic and acidic residues. Residues glutamate 211 to asparagine 225 are compositionally biased toward acidic residues. 3 DNA-binding regions span residues arginine 238–phenylalanine 242, asparagine 307–tyrosine 314, and tyrosine 378–threonine 381.

It belongs to the FLO/LFY family. In terms of tissue distribution, expressed in floral meristems and in indeterminate vegetative meristems.

The protein resides in the nucleus. Probable transcription factor that act to specify determinacy in the progenitor cells for both flowers and leaves. The chain is Floricaula/leafy homolog 1 (FL1) from Nicotiana tabacum (Common tobacco).